The sequence spans 231 residues: Ureidoacrylate amidohydrolase RutB (231 aa).

Aspartate 25 functions as the Proton acceptor in the catalytic mechanism. Residue lysine 134 is part of the active site. Cysteine 167 serves as the catalytic Nucleophile.

It belongs to the isochorismatase family. RutB subfamily.

The enzyme catalyses (Z)-3-ureidoacrylate + H2O + H(+) = (Z)-3-aminoacrylate + NH4(+) + CO2. It catalyses the reaction (Z)-3-ureidoacrylate + H2O = (Z)-3-aminoacrylate + carbamate + H(+). It carries out the reaction (Z)-2-methylureidoacrylate + H2O + H(+) = (Z)-2-methylaminoacrylate + NH4(+) + CO2. In terms of biological role, hydrolyzes ureidoacrylate to form aminoacrylate and carbamate. The carbamate hydrolyzes spontaneously, thereby releasing one of the nitrogen atoms of the pyrimidine ring as ammonia and one of its carbon atoms as CO2. In Escherichia coli O18:K1:H7 (strain IHE3034 / ExPEC), this protein is Ureidoacrylate amidohydrolase RutB.